The following is a 194-amino-acid chain: MRKAEVKRKTRETDIYVELNIDGKGNYDIATGIGFFDHMLSLFAKHGLFDLKVVAKGDLEVDTHHTVEDVGIVLGNAFLKAAGDKKSIKRFSTFYVPMDEALVRVSVDISGRPFLYCDLPLKAERVGNFETENVEEFLRAFAYNFGITLHVELLHGSNSHHIIEATFKALGRALDEALRIDERVEGIPSTKGIL.

This sequence belongs to the imidazoleglycerol-phosphate dehydratase family.

The protein localises to the cytoplasm. It catalyses the reaction D-erythro-1-(imidazol-4-yl)glycerol 3-phosphate = 3-(imidazol-4-yl)-2-oxopropyl phosphate + H2O. Its pathway is amino-acid biosynthesis; L-histidine biosynthesis; L-histidine from 5-phospho-alpha-D-ribose 1-diphosphate: step 6/9. The protein is Imidazoleglycerol-phosphate dehydratase of Thermoanaerobacter pseudethanolicus (strain ATCC 33223 / 39E) (Clostridium thermohydrosulfuricum).